The following is a 246-amino-acid chain: 2-aminoethylphosphonate cytidylyltransferase (246 aa).

Residues A19, G20, K34, S97, E114, and A115 each coordinate CMP-(2-aminoethyl)phosphonate. The Mg(2+) site is built by D116 and D145. CMP-(2-aminoethyl)phosphonate is bound by residues D145, K161, and D202. E226 and D228 together coordinate Mg(2+).

This sequence belongs to the LicC/PntC cytidylyltransferase family. Monomer. Mg(2+) is required as a cofactor.

The catalysed reaction is (2-aminoethyl)phosphonate + CTP = CMP-(2-aminoethyl)phosphonate + diphosphate. It participates in phosphorus metabolism; phosphonate biosynthesis. Functionally, cytidylyltransferase involved in the biosynthesis of cell-surface phosphonates. Catalyzes the activation of 2-aminoethylphosphonate (AEP) to CMP-2-aminoethylphosphonate (CMP-AEP). Can also use phosphocholine, with much lower efficiency. Exhibits strong activity towards CTP, limited activity towards ATP and no activity with GTP. This chain is 2-aminoethylphosphonate cytidylyltransferase, found in Lancefieldella rimae (strain ATCC 49626 / DSM 7090 / CCUG 31168 / NBRC 15546 / VPI D140H-11A) (Atopobium rimae).